The primary structure comprises 92 residues: Beta-2-microglobulin (92 aa).

Positions 2–89 constitute an Ig-like C1-type domain; sequence PQIQVYSRHP…NHVSMDKPMT (88 aa). A disulfide bridge links cysteine 22 with cysteine 77.

This sequence belongs to the beta-2-microglobulin family. Heterodimer of an alpha chain and a beta chain. Beta-2-microglobulin is the beta-chain of major histocompatibility complex class I molecules.

It localises to the secreted. In terms of biological role, component of the class I major histocompatibility complex (MHC). Involved in the presentation of peptide antigens to the immune system. In Mus spretus (Western Mediterranean mouse), this protein is Beta-2-microglobulin (B2m).